The primary structure comprises 148 residues: MKVIFTQDVKGKGKKGEVKDVPVGYANNFLLKNKYAVEATPGNLKQLEQQNKRAEADRQQEIDDAKALKEQLKDIEVEVSAKTGEGGKLFGSISTKQIAEALKKQHDIKIDKRKMDLPHGIHALGYTNVPVKLDKEVEGTIRVHTVEQ.

This sequence belongs to the bacterial ribosomal protein bL9 family.

Functionally, binds to the 23S rRNA. This is Large ribosomal subunit protein bL9 from Staphylococcus epidermidis (strain ATCC 35984 / DSM 28319 / BCRC 17069 / CCUG 31568 / BM 3577 / RP62A).